A 315-amino-acid chain; its full sequence is DNA-directed RNA polymerase subunit alpha (315 aa).

Residues 1–228 (MAQFQIECVE…DLFNPLKDIS (228 aa)) are alpha N-terminal domain (alpha-NTD). Positions 238-315 (IPDDPTAQIP…LPQERSSKHS (78 aa)) are alpha C-terminal domain (alpha-CTD).

This sequence belongs to the RNA polymerase alpha chain family. As to quaternary structure, in cyanobacteria the RNAP catalytic core is composed of 2 alpha, 1 beta, 1 beta', 1 gamma and 1 omega subunit. When a sigma factor is associated with the core the holoenzyme is formed, which can initiate transcription.

It carries out the reaction RNA(n) + a ribonucleoside 5'-triphosphate = RNA(n+1) + diphosphate. DNA-dependent RNA polymerase catalyzes the transcription of DNA into RNA using the four ribonucleoside triphosphates as substrates. This Trichormus variabilis (strain ATCC 29413 / PCC 7937) (Anabaena variabilis) protein is DNA-directed RNA polymerase subunit alpha.